The following is a 100-amino-acid chain: Small ribosomal subunit protein uS14c (100 aa).

This sequence belongs to the universal ribosomal protein uS14 family. Part of the 30S ribosomal subunit.

The protein resides in the plastid. Functionally, binds 16S rRNA, required for the assembly of 30S particles. The protein is Small ribosomal subunit protein uS14c of Aneura mirabilis (Parasitic liverwort).